The following is a 476-amino-acid chain: WD repeat, SAM and U-box domain-containing protein 1 (476 aa).

WD repeat units follow at residues 10-47 (DHGD…ELPH), 52-91 (FHTY…MLAV), 95-134 (PSGS…LYRC), 137-176 (VKDG…LHSE), 178-228 (AHDL…LGFE), 237-276 (GHCA…ILHT), and 279-318 (QHTR…LCQA). Residues 332 to 396 (WSEEDVSTWL…LRKIEELRTK (65 aa)) form the SAM domain. A U-box domain is found at 403–476 (GIPDEFICPI…INRWLETHQK (74 aa)). Residue threonine 458 is modified to Phosphothreonine.

This is WD repeat, SAM and U-box domain-containing protein 1 (WDSUB1) from Homo sapiens (Human).